Consider the following 191-residue polypeptide: Peptidyl-tRNA hydrolase (191 aa).

Y14 contributes to the tRNA binding site. H19 serves as the catalytic Proton acceptor. Residues Y65, N67, and N113 each coordinate tRNA.

The protein belongs to the PTH family. As to quaternary structure, monomer.

Its subcellular location is the cytoplasm. It carries out the reaction an N-acyl-L-alpha-aminoacyl-tRNA + H2O = an N-acyl-L-amino acid + a tRNA + H(+). Its function is as follows. Hydrolyzes ribosome-free peptidyl-tRNAs (with 1 or more amino acids incorporated), which drop off the ribosome during protein synthesis, or as a result of ribosome stalling. Functionally, catalyzes the release of premature peptidyl moieties from peptidyl-tRNA molecules trapped in stalled 50S ribosomal subunits, and thus maintains levels of free tRNAs and 50S ribosomes. The polypeptide is Peptidyl-tRNA hydrolase (Nitrosospira multiformis (strain ATCC 25196 / NCIMB 11849 / C 71)).